Reading from the N-terminus, the 366-residue chain is uncharacterized protein (366 aa).

Residues 59 to 222 form the CP-type G domain; sequence LNILHGIGET…LYDTPGIINN (164 aa).

The protein belongs to the TRAFAC class YlqF/YawG GTPase family.

Its function is as follows. Binds GTP and GDP. This is an uncharacterized protein from Bacillus subtilis (strain 168).